The primary structure comprises 261 residues: Putative methyltransferase MJ0046 (261 aa).

This sequence belongs to the methyltransferase superfamily.

This is Putative methyltransferase MJ0046 from Methanocaldococcus jannaschii (strain ATCC 43067 / DSM 2661 / JAL-1 / JCM 10045 / NBRC 100440) (Methanococcus jannaschii).